A 504-amino-acid polypeptide reads, in one-letter code: Cytochrome P450 monooxygenase gsfF (504 aa).

The signal sequence occupies residues 1–16 (MTVLFILSAGLVAVFG). N97 and N150 each carry an N-linked (GlcNAc...) asparagine glycan. C450 lines the heme pocket.

This sequence belongs to the cytochrome P450 family. Heme serves as cofactor.

It carries out the reaction griseophenone B + reduced [NADPH--hemoprotein reductase] + O2 + H(+) = desmethyl-dehydrogriseofulvin + oxidized [NADPH--hemoprotein reductase] + 2 H2O. It functions in the pathway secondary metabolite biosynthesis; terpenoid biosynthesis. Its function is as follows. Cytochrome P450 monooxygenase; part of the gene cluster that mediates the biosynthesis of griseofulvin, an important antifungal drug that has been in use for a long time for treating dermatophyte infections. The first step of the pathway is the formation of the heptaketide backbone by gsfA which is initiated by priming with acetyl-CoA, followed by sequential condensations of 6 malonyl-CoA units. The resulting benzophenone can undergo a spontaneous dehydration to form norlichexanthone. However, the true precursor for the griseofulvin biosynthesis is not norlichexanthone, but the heptaketide benzophenone that is O-methylated at 3-OH by gsfB to produce griseophenone D which is further methylated at 9-OH by gsfC to yield griseophenone C. Griseophenone C is then substrate of halogenase gsfI which is responsible for the regio-specific chlorination at the C13 position to form griseophenone B. The cytochrome P450 gsfF catalyzes the coupling of orcinol and phloroglucinol rings in griseophenone B to form desmethyl-dehydrogriseofulvin A which is further methylated at 5-OH by gsfD to yield dehydrogriseofulvin. Finally, gsfE performs stereospecific reduction of enone 18 of dehydrogriseofulvin to afford the final product griseofulvin. This is Cytochrome P450 monooxygenase gsfF from Penicillium aethiopicum.